A 277-amino-acid polypeptide reads, in one-letter code: 2,3,4,5-tetrahydropyridine-2,6-dicarboxylate N-succinyltransferase (277 aa).

The substrate site is built by Arg-106 and Asp-143.

Belongs to the transferase hexapeptide repeat family. As to quaternary structure, homotrimer.

It localises to the cytoplasm. The enzyme catalyses (S)-2,3,4,5-tetrahydrodipicolinate + succinyl-CoA + H2O = (S)-2-succinylamino-6-oxoheptanedioate + CoA. It participates in amino-acid biosynthesis; L-lysine biosynthesis via DAP pathway; LL-2,6-diaminopimelate from (S)-tetrahydrodipicolinate (succinylase route): step 1/3. In Variovorax paradoxus (strain S110), this protein is 2,3,4,5-tetrahydropyridine-2,6-dicarboxylate N-succinyltransferase.